Consider the following 232-residue polypeptide: Large ribosomal subunit protein uL1 (232 aa).

This sequence belongs to the universal ribosomal protein uL1 family. Part of the 50S ribosomal subunit.

Binds directly to 23S rRNA. The L1 stalk is quite mobile in the ribosome, and is involved in E site tRNA release. Its function is as follows. Protein L1 is also a translational repressor protein, it controls the translation of the L11 operon by binding to its mRNA. In Rhizobium rhizogenes (strain K84 / ATCC BAA-868) (Agrobacterium radiobacter), this protein is Large ribosomal subunit protein uL1.